The primary structure comprises 516 residues: uncharacterized protein (516 aa).

This is an uncharacterized protein from Azotobacter chroococcum mcd 1.